Here is a 304-residue protein sequence, read N- to C-terminus: Cbb3-type cytochrome c oxidase subunit CcoP (304 aa).

2 helical membrane passes run 11–31 (LYVAGITVVSLIFCLVVLIVA) and 61–81 (WWAGLFLVTIAFAVIYLALYP). Cytochrome c domains lie at 129–209 (QAMA…LSLS) and 216–296 (VAAQ…WSLS). 8 residues coordinate heme c: Cys142, Cys145, His146, Met185, Cys228, Cys231, His232, and Met273.

This sequence belongs to the CcoP / FixP family. As to quaternary structure, component of the cbb3-type cytochrome c oxidase at least composed of CcoN, CcoO, CcoQ and CcoP. Heme c serves as cofactor.

Its subcellular location is the cell inner membrane. The protein operates within energy metabolism; oxidative phosphorylation. Functionally, C-type cytochrome. Part of the cbb3-type cytochrome c oxidase complex. CcoP subunit is required for transferring electrons from donor cytochrome c via its heme groups to CcoO subunit. From there, electrons are shuttled to the catalytic binuclear center of CcoN subunit where oxygen reduction takes place. The complex also functions as a proton pump. The sequence is that of Cbb3-type cytochrome c oxidase subunit CcoP from Rubrivivax gelatinosus (Rhodocyclus gelatinosus).